The chain runs to 520 residues: Probable cytosol aminopeptidase (520 aa).

Residues Lys-232 and Asp-237 each coordinate Mn(2+). Lys-244 is a catalytic residue. Mn(2+) is bound by residues Asp-255, Asp-314, and Glu-316. Arg-318 is an active-site residue. Residues 488–520 are disordered; the sequence is KAKKSTAKKATTKKTTTRKTASKTKSTKSKARK.

It belongs to the peptidase M17 family. Requires Mn(2+) as cofactor.

It localises to the cytoplasm. The catalysed reaction is Release of an N-terminal amino acid, Xaa-|-Yaa-, in which Xaa is preferably Leu, but may be other amino acids including Pro although not Arg or Lys, and Yaa may be Pro. Amino acid amides and methyl esters are also readily hydrolyzed, but rates on arylamides are exceedingly low.. It catalyses the reaction Release of an N-terminal amino acid, preferentially leucine, but not glutamic or aspartic acids.. Presumably involved in the processing and regular turnover of intracellular proteins. Catalyzes the removal of unsubstituted N-terminal amino acids from various peptides. This is Probable cytosol aminopeptidase (pepA) from Metamycoplasma salivarium (Mycoplasma salivarium).